A 180-amino-acid polypeptide reads, in one-letter code: Small ribosomal subunit protein uS4 (180 aa).

The S4 RNA-binding domain occupies 103–165 (RRLQTIVYRK…KGSPFAKEGH (63 aa)).

The protein belongs to the universal ribosomal protein uS4 family. Part of the 30S ribosomal subunit. Contacts protein S5. The interaction surface between S4 and S5 is involved in control of translational fidelity.

Its function is as follows. One of the primary rRNA binding proteins, it binds directly to 16S rRNA where it nucleates assembly of the body of the 30S subunit. In terms of biological role, with S5 and S12 plays an important role in translational accuracy. The protein is Small ribosomal subunit protein uS4 of Thermococcus kodakarensis (strain ATCC BAA-918 / JCM 12380 / KOD1) (Pyrococcus kodakaraensis (strain KOD1)).